The chain runs to 591 residues: NADH-quinone oxidoreductase subunit C/D (591 aa).

The segment at 1–182 is NADH dehydrogenase I subunit C; it reads MVTVVENIDP…TPYFLNTAKQ (182 aa). The segment at 206–591 is NADH dehydrogenase I subunit D; it reads DFMFLNIGPN…IDVVMADCDR (386 aa).

This sequence in the N-terminal section; belongs to the complex I 30 kDa subunit family. The protein in the C-terminal section; belongs to the complex I 49 kDa subunit family. In terms of assembly, NDH-1 is composed of 13 different subunits. Subunits NuoB, CD, E, F, and G constitute the peripheral sector of the complex.

Its subcellular location is the cell inner membrane. The catalysed reaction is a quinone + NADH + 5 H(+)(in) = a quinol + NAD(+) + 4 H(+)(out). NDH-1 shuttles electrons from NADH, via FMN and iron-sulfur (Fe-S) centers, to quinones in the respiratory chain. The immediate electron acceptor for the enzyme in this species is believed to be ubiquinone. Couples the redox reaction to proton translocation (for every two electrons transferred, four hydrogen ions are translocated across the cytoplasmic membrane), and thus conserves the redox energy in a proton gradient. The polypeptide is NADH-quinone oxidoreductase subunit C/D (Psychrobacter arcticus (strain DSM 17307 / VKM B-2377 / 273-4)).